The chain runs to 252 residues: 7-cyano-7-deazaguanine synthase (252 aa).

22–32 serves as a coordination point for ATP; sequence FSGGQDSTTCL. Zn(2+)-binding residues include Cys215, Cys230, Cys233, and Cys236.

It belongs to the QueC family. Zn(2+) serves as cofactor.

The catalysed reaction is 7-carboxy-7-deazaguanine + NH4(+) + ATP = 7-cyano-7-deazaguanine + ADP + phosphate + H2O + H(+). The protein operates within purine metabolism; 7-cyano-7-deazaguanine biosynthesis. In terms of biological role, catalyzes the ATP-dependent conversion of 7-carboxy-7-deazaguanine (CDG) to 7-cyano-7-deazaguanine (preQ(0)). This chain is 7-cyano-7-deazaguanine synthase, found in Granulibacter bethesdensis (strain ATCC BAA-1260 / CGDNIH1).